Here is a 414-residue protein sequence, read N- to C-terminus: MEQRVQLRVGTMETISNEGDVDREQVLETFGIENETGKETNGSRSFDVGYSSGDTLETLPKASKVDISPADVLKTLFFILVWYTFSTFLTLYNKTLLGDDLGKFPAPLLMNTIHFSIQAVLSKMITWYWSGRFQPDVTISWRDYFVRVVPTALGTAMDINLSNESLVFISVTFATMCKSAAPIFLLLFAFAFRLESPSLKLFGIISVISAGVLLTVAKETEFEFWGFVFVMLAAVMSGFRWCMTQVLLQKETFGLKNPFIFMSCVAPVMAIATGLLSLLLDPWSEFRDNKYFDSGAHFARTCFLMLFGGALAFCMVLTEYVLVSVTSAVTVTIAGVVKEAVTIVVAVFYFHDEFTWLKGVGLMIIMVGVSLFNWYKYDKLQKGHKTEEEKQLQAPSQTGKYVILDEMDDQENSP.

Helical transmembrane passes span 72 to 92, 101 to 121, 172 to 192, 197 to 217, 224 to 244, 259 to 279, 303 to 323, 328 to 348, and 354 to 374; these read VLKT…LTLY, LGKF…QAVL, TFAT…AFAF, PSLK…LTVA, FWGF…WCMT, FIFM…LSLL, FLML…YVLV, AVTV…VAVF, and FTWL…LFNW. The EamA domain occupies 106-216; the sequence is APLLMNTIHF…VISAGVLLTV (111 aa).

Belongs to the TPT transporter family. TPT (TC 2.A.7.9) subfamily.

The protein resides in the membrane. In Arabidopsis thaliana (Mouse-ear cress), this protein is Probable sugar phosphate/phosphate translocator At1g06470.